The following is a 312-amino-acid chain: Olfactory receptor 2L8 (312 aa).

At 1 to 24 the chain is on the extracellular side; that stretch reads MENYNQTSTDFILLGLFPPSRIDL. Residue Asn-5 is glycosylated (N-linked (GlcNAc...) asparagine). The chain crosses the membrane as a helical span at residues 25–48; sequence FFFILIVFIFLMALIGNLSMILLI. At 49-56 the chain is on the cytoplasmic side; it reads FLDTHLHT. A helical transmembrane segment spans residues 57 to 78; sequence PMYFLLSQLSLIDLNYISTIVP. Over 79-99 the chain is Extracellular; the sequence is KMASDFLHGNKSISFTGCGIQ. Residue Asn-88 is glycosylated (N-linked (GlcNAc...) asparagine). The cysteines at positions 96 and 188 are disulfide-linked. A helical transmembrane segment spans residues 100-119; it reads SFFFLALGGAEALLLASMAY. Residues 120-138 lie on the Cytoplasmic side of the membrane; it reads DRYIAICFPLHYLIRMSKR. Residues 139-157 traverse the membrane as a helical segment; sequence VCVLMITGSWIIGSINACA. Residues 158-194 lie on the Extracellular side of the membrane; the sequence is HTVYVLHIPYCRSRAINHFFCDVPAMVTLACMDTWVY. A helical membrane pass occupies residues 195-218; it reads EGTVFLSATIFLVFPFIGISCSYG. Topologically, residues 219 to 235 are cytoplasmic; the sequence is QVLFAVYHMKSAEGRKK. The chain crosses the membrane as a helical span at residues 236-258; that stretch reads AYLTCSTHLTVVTFYYAPFVYTY. At 259 to 271 the chain is on the extracellular side; it reads LRPRSLRSPTEDK. A helical membrane pass occupies residues 272-291; the sequence is VLAVFYTILTPMLNPIIYSL. At 292-312 the chain is on the cytoplasmic side; that stretch reads RNKEVMGALTRVSQRICSVKM.

This sequence belongs to the G-protein coupled receptor 1 family.

The protein localises to the cell membrane. Functionally, odorant receptor. This Homo sapiens (Human) protein is Olfactory receptor 2L8 (OR2L8).